We begin with the raw amino-acid sequence, 590 residues long: Acetolactate synthase large subunit (590 aa).

Glu61 provides a ligand contact to thiamine diphosphate. FAD contacts are provided by residues Arg163, 271-292 (HGTA…LGAR), and 314-333 (DIDP…IVGD). The tract at residues 405–484 (QHQMWSAQFL…IKIVIINNRW (80 aa)) is thiamine pyrophosphate binding. Mg(2+) contacts are provided by Asp455 and Asn482.

This sequence belongs to the TPP enzyme family. As to quaternary structure, dimer of large and small chains. The cofactor is Mg(2+). Requires thiamine diphosphate as cofactor.

It is found in the plastid. The protein localises to the chloroplast. The catalysed reaction is 2 pyruvate + H(+) = (2S)-2-acetolactate + CO2. The protein operates within amino-acid biosynthesis; L-isoleucine biosynthesis; L-isoleucine from 2-oxobutanoate: step 1/4. Its pathway is amino-acid biosynthesis; L-valine biosynthesis; L-valine from pyruvate: step 1/4. This is Acetolactate synthase large subunit (ilvB) from Porphyra purpurea (Red seaweed).